Consider the following 352-residue polypeptide: UDP-N-acetylglucosamine--N-acetylmuramyl-(pentapeptide) pyrophosphoryl-undecaprenol N-acetylglucosamine transferase (352 aa).

UDP-N-acetyl-alpha-D-glucosamine is bound by residues S195 and Q287.

It belongs to the glycosyltransferase 28 family. MurG subfamily.

The protein resides in the cell membrane. The catalysed reaction is Mur2Ac(oyl-L-Ala-gamma-D-Glu-L-Lys-D-Ala-D-Ala)-di-trans,octa-cis-undecaprenyl diphosphate + UDP-N-acetyl-alpha-D-glucosamine = beta-D-GlcNAc-(1-&gt;4)-Mur2Ac(oyl-L-Ala-gamma-D-Glu-L-Lys-D-Ala-D-Ala)-di-trans,octa-cis-undecaprenyl diphosphate + UDP + H(+). Its pathway is cell wall biogenesis; peptidoglycan biosynthesis. Functionally, cell wall formation. Catalyzes the transfer of a GlcNAc subunit on undecaprenyl-pyrophosphoryl-MurNAc-pentapeptide (lipid intermediate I) to form undecaprenyl-pyrophosphoryl-MurNAc-(pentapeptide)GlcNAc (lipid intermediate II). The chain is UDP-N-acetylglucosamine--N-acetylmuramyl-(pentapeptide) pyrophosphoryl-undecaprenol N-acetylglucosamine transferase from Streptococcus pneumoniae (strain 70585).